Reading from the N-terminus, the 303-residue chain is uncharacterized protein (303 aa).

6 helical membrane passes run 12–32 (GLPIGSPMYAHLLAGAFSGIL), 81–101 (ISSVIMGAGPSHAIYFSVLEF), 117–137 (ALAGACAITISDAFMTPFDVI), 174–194 (CIAMSIPFTAIQVATYDTCMS), 208–228 (IISGGLSGAIASSLTTPLDVV), and 265–286 (FFKGIRPRMVVAMPATAVSWAA). 3 Solcar repeats span residues 17–105 (SPMY…FKSK), 111–195 (DRPL…CMSF), and 206–293 (SHII…GKEI).

This sequence belongs to the mitochondrial carrier (TC 2.A.29) family.

Its subcellular location is the mitochondrion inner membrane. This is an uncharacterized protein from Schizosaccharomyces pombe (strain 972 / ATCC 24843) (Fission yeast).